Here is a 163-residue protein sequence, read N- to C-terminus: NF-kappa-B inhibitor-interacting Ras-like protein 2 (163 aa).

The interval 1-163 (MGKSCKVVIC…SANWNLHPDH (163 aa)) is small GTPase-like. 11–18 (GQHGVGKT) contacts GTP. The Effector region motif lies at 35–43 (MIETQEDIY). Residues 61 to 65 (DTRGL) and 120 to 123 (NKSD) each bind GTP.

Belongs to the small GTPase superfamily. Ras family. KappaB-Ras subfamily.

It is found in the cytoplasm. Its function is as follows. Atypical Ras-like protein that acts as a potent regulator of NF-kappa-B activity by preventing the degradation of NF-kappa-B inhibitor beta (NFKBIB) by most signals, explaining why NFKBIB is more resistant to degradation. The chain is NF-kappa-B inhibitor-interacting Ras-like protein 2 (nkiras2) from Xenopus laevis (African clawed frog).